A 141-amino-acid chain; its full sequence is Galactose-6-phosphate isomerase subunit LacA 1 (141 aa).

It belongs to the LacAB/RpiB family. In terms of assembly, heteromultimeric protein consisting of LacA and LacB.

The enzyme catalyses aldehydo-D-galactose 6-phosphate = keto-D-tagatose 6-phosphate. It participates in carbohydrate metabolism; D-galactose 6-phosphate degradation; D-tagatose 6-phosphate from D-galactose 6-phosphate: step 1/1. In Streptococcus pyogenes serotype M6 (strain ATCC BAA-946 / MGAS10394), this protein is Galactose-6-phosphate isomerase subunit LacA 1.